We begin with the raw amino-acid sequence, 341 residues long: 5-formaminoimidazole-4-carboxamide-1-(beta)-D-ribofuranosyl 5'-monophosphate synthetase (341 aa).

The 5-amino-1-(5-phospho-beta-D-ribosyl)imidazole-4-carboxamide site is built by H10 and T77. Residues 106 to 317 (DREMKEKLMR…YYNLLFNETM (212 aa)) form the ATP-grasp domain. ATP-binding positions include 132-188 (EKLS…VLAY) and E210. Residue N238 participates in 5-amino-1-(5-phospho-beta-D-ribosyl)imidazole-4-carboxamide binding. Mg(2+) is bound by residues E277 and E290.

It belongs to the phosphohexose mutase family. Requires Mg(2+) as cofactor. It depends on Mn(2+) as a cofactor.

The catalysed reaction is 5-amino-1-(5-phospho-beta-D-ribosyl)imidazole-4-carboxamide + formate + ATP = 5-formamido-1-(5-phospho-D-ribosyl)imidazole-4-carboxamide + ADP + phosphate. Its pathway is purine metabolism; IMP biosynthesis via de novo pathway; 5-formamido-1-(5-phospho-D-ribosyl)imidazole-4-carboxamide from 5-amino-1-(5-phospho-D-ribosyl)imidazole-4-carboxamide (formate route): step 1/1. Functionally, catalyzes the ATP- and formate-dependent formylation of 5-aminoimidazole-4-carboxamide-1-beta-d-ribofuranosyl 5'-monophosphate (AICAR) to 5-formaminoimidazole-4-carboxamide-1-beta-d-ribofuranosyl 5'-monophosphate (FAICAR) in the absence of folates. In Nitrosopumilus maritimus (strain SCM1), this protein is 5-formaminoimidazole-4-carboxamide-1-(beta)-D-ribofuranosyl 5'-monophosphate synthetase.